The sequence spans 130 residues: uncharacterized protein (130 aa).

Residues 1–100 (MSSNSDNTEC…AEPDAAKEEP (100 aa)) form a disordered region. Composition is skewed to basic and acidic residues over residues 57-75 (YTTRSKYESDVSEFKKMMD) and 91-100 (AEPDAAKEEP).

This is an uncharacterized protein from Equine herpesvirus 1 (strain Ab4p) (EHV-1).